A 454-amino-acid polypeptide reads, in one-letter code: Transcription factor efuD (454 aa).

An HTH TFE/IIEalpha-type domain is found at 4-111; the sequence is AKELIRITAR…NYHRAIDSIK (108 aa). A disordered region spans residues 327 to 454; sequence LRTDDDGAMD…DEDELEFEDI (128 aa). Acidic residues predominate over residues 353-372; it reads DQDEEEEEEDDDDDEFEDVD. Residues 387–401 are compositionally biased toward polar residues; it reads SVSTPATSAQVSSTA. Over residues 423–437 the composition is skewed to low complexity; the sequence is APAAAASSQAAAAES. Residues 442 to 454 are compositionally biased toward acidic residues; sequence SDEDEDELEFEDI.

This sequence belongs to the TFIIE alpha subunit family.

The protein localises to the nucleus. Transcription factor; part of the gene cluster that mediates the biosynthesis of enfumafungin, a glycosylated fernene-type triterpenoid with potent antifungal activity, mediated by its interaction with beta-1,3-glucan synthase and the fungal cell wall. Is possibly responsible for the transcription regulation of one or more genes within the gene cluster. The protein is Transcription factor efuD of Hormonema carpetanum.